A 313-amino-acid polypeptide reads, in one-letter code: E3 ubiquitin-protein ligase RNF126 (313 aa).

Alanine 2 is modified (N-acetylalanine). Serine 5 is subject to Phosphoserine. The interval 5–100 is required for interaction with BAG6; sequence SPQPGRYFCH…FEIPTFPPGA (96 aa). Residues cysteine 13, cysteine 16, cysteine 29, and cysteine 32 each contribute to the Zn(2+) site. The C4-type zinc finger occupies 13-32; that stretch reads CHCCSVEIVPRLPDYICPRC. Disordered regions lie at residues 42-63 and 95-128; these read EETR…QNRQ and TFPP…RQPR. The segment covering 47–63 has biased composition (polar residues); the sequence is TENGSAPSTAPTDQNRQ. A compositionally biased stretch (basic and acidic residues) spans 103 to 116; the sequence is DDGRDPESRREREH. Residues 117–128 are compositionally biased toward basic residues; sequence QSRHRYGARQPR. The interval 202-306 is sufficient for interaction with AICDA; that stretch reads TGPPPADKEK…SSSSSSSPSN (105 aa). Residues 231-272 form an RING-type zinc finger; it reads CPVCKEDYALGESVRQLPCNHLFHDSCIVPWLEQHDSCPVCR. Positions 279–313 are disordered; it reads NTATNPPGLTGVGFSSSSSSSSSSSPSNENATSNS. Residues 293-313 are compositionally biased toward low complexity; sequence SSSSSSSSSSSPSNENATSNS.

As to quaternary structure, interacts with CCDC50, EGFR, FLT3 and SCAMP3. Interacts with BAG6 (via ubiquitin-like domain); required for BAG6-dependent ubiquitination of proteins mislocalized to the cytosol. Interacts with CDKN1A. Interacts with AICDA. Post-translationally, ubiquitinated. May undergo autoubiquitination. As to expression, detected in B-cells (at protein level).

It localises to the cytoplasm. The protein localises to the nucleus. The enzyme catalyses S-ubiquitinyl-[E2 ubiquitin-conjugating enzyme]-L-cysteine + [acceptor protein]-L-lysine = [E2 ubiquitin-conjugating enzyme]-L-cysteine + N(6)-ubiquitinyl-[acceptor protein]-L-lysine.. Its pathway is protein modification; protein ubiquitination. In terms of biological role, E3 ubiquitin-protein ligase that mediates ubiquitination oF target proteins. Depending on the associated E2 ligase, mediates 'Lys-27'-, 'Lys-29'-, 'Lys-48'- and/or 'Lys-63'-linked polyubiquitination of substrates. Part of a BAG6-dependent quality control process ensuring that proteins of the secretory pathway that are mislocalized to the cytosol are degraded by the proteasome. Probably acts by providing the ubiquitin ligase activity associated with the BAG6 complex and be responsible for ubiquitination of the hydrophobic mislocalized proteins and their targeting to the proteasome. May also play a role in the endosomal recycling of IGF2R, the cation-independent mannose-6-phosphate receptor. May play a role in the endosomal sorting and degradation of several membrane receptors including EGFR, FLT3, MET and CXCR4, by mediating their ubiquitination. By ubiquitinating CDKN1A/p21 and targeting it for degradation, may also promote cell proliferation. May monoubiquitinate AICDA. Acts as a regulator of DNA repair by mediating 'Lys-27'- and 'Lys-29'-linked polyubiquitination of MRE11, thereby promoting the exonuclease activity of MRE11. This Mus musculus (Mouse) protein is E3 ubiquitin-protein ligase RNF126.